The following is a 190-amino-acid chain: Ribosome hibernation promotion factor (190 aa).

Belongs to the HPF/YfiA ribosome-associated protein family. Long HPF subfamily. In terms of assembly, interacts with 100S ribosomes.

The protein resides in the cytoplasm. Functionally, required for dimerization of active 70S ribosomes into 100S ribosomes in stationary phase; 100S ribosomes are translationally inactive and sometimes present during exponential growth. The protein is Ribosome hibernation promotion factor of Staphylococcus saprophyticus subsp. saprophyticus (strain ATCC 15305 / DSM 20229 / NCIMB 8711 / NCTC 7292 / S-41).